A 159-amino-acid chain; its full sequence is Ribosome maturation factor RimP (159 aa).

This sequence belongs to the RimP family.

The protein resides in the cytoplasm. Its function is as follows. Required for maturation of 30S ribosomal subunits. This Trichlorobacter lovleyi (strain ATCC BAA-1151 / DSM 17278 / SZ) (Geobacter lovleyi) protein is Ribosome maturation factor RimP.